A 531-amino-acid polypeptide reads, in one-letter code: Nuclear RNA export factor 3 (531 aa).

Disordered regions lie at residues 33–59 (RSEP…HGAH) and 83–106 (QDQT…GNMP). Over residues 41 to 50 (MHSSSHQQQD) the composition is skewed to polar residues. The span at 83–102 (QDQTHVNMEREQKPPERRME) shows a compositional bias: basic and acidic residues. Residues 113-192 (WFKITVPFGI…IFVNPAGIPH (80 aa)) form the RRM domain. The region spanning 344–494 (LVLQFLQQYY…LCIVNDKLFV (151 aa)) is the NTF2 domain.

The protein belongs to the NXF family. In terms of assembly, interacts with NXT1, NXT2, E1B-AP5 and CRM1 nuclear export factor. As to expression, expressed at high level in testis and at low level in a small number of tissues.

The protein resides in the nucleus. Its subcellular location is the cytoplasm. Its function is as follows. May function as a tissue-specific nuclear mRNA export factor. This chain is Nuclear RNA export factor 3 (NXF3), found in Homo sapiens (Human).